The sequence spans 150 residues: D-aminoacyl-tRNA deacylase (150 aa).

The Gly-cisPro motif, important for rejection of L-amino acids signature appears at 138–139 (GP).

This sequence belongs to the DTD family. Homodimer.

The protein resides in the cytoplasm. It catalyses the reaction glycyl-tRNA(Ala) + H2O = tRNA(Ala) + glycine + H(+). The catalysed reaction is a D-aminoacyl-tRNA + H2O = a tRNA + a D-alpha-amino acid + H(+). Functionally, an aminoacyl-tRNA editing enzyme that deacylates mischarged D-aminoacyl-tRNAs. Also deacylates mischarged glycyl-tRNA(Ala), protecting cells against glycine mischarging by AlaRS. Acts via tRNA-based rather than protein-based catalysis; rejects L-amino acids rather than detecting D-amino acids in the active site. By recycling D-aminoacyl-tRNA to D-amino acids and free tRNA molecules, this enzyme counteracts the toxicity associated with the formation of D-aminoacyl-tRNA entities in vivo and helps enforce protein L-homochirality. In Salinibacter ruber (strain DSM 13855 / M31), this protein is D-aminoacyl-tRNA deacylase.